The chain runs to 124 residues: Small ribosomal subunit protein eS6 (124 aa).

This sequence belongs to the eukaryotic ribosomal protein eS6 family.

This is Small ribosomal subunit protein eS6 from Methanococcus maripaludis (strain C6 / ATCC BAA-1332).